Consider the following 403-residue polypeptide: Nuclear receptor subfamily 2 group F member 5 (403 aa).

The interval 16–44 (PGSQLQMCSQEPGGTPGTPSGSTPGNDAL) is disordered. The segment at residues 51-126 (NVDCMVCGDK…VGMRREAVQR (76 aa)) is a DNA-binding region (nuclear receptor). 2 consecutive NR C4-type zinc fingers follow at residues 54-74 (CMVCGDKSSGKHYGQFTCEGC) and 90-114 (CRGNRDCPIDQHHRNQCQYCRLKKC). Residues 152-378 (YLSGFISLLL…TLLRDMLLSG (227 aa)) form the NR LBD domain.

Belongs to the nuclear hormone receptor family. NR2 subfamily.

The protein localises to the nucleus. Putative receptor that is required in photoreceptor cells precursors during eye development. This chain is Nuclear receptor subfamily 2 group F member 5 (nr2f5), found in Danio rerio (Zebrafish).